A 368-amino-acid polypeptide reads, in one-letter code: Chorismate synthase (368 aa).

R46 lines the NADP(+) pocket. FMN is bound by residues 124 to 126, G284, 299 to 303, and R326; these read RAS and KPTPS.

It belongs to the chorismate synthase family. It depends on FMNH2 as a cofactor.

It catalyses the reaction 5-O-(1-carboxyvinyl)-3-phosphoshikimate = chorismate + phosphate. Its pathway is metabolic intermediate biosynthesis; chorismate biosynthesis; chorismate from D-erythrose 4-phosphate and phosphoenolpyruvate: step 7/7. Catalyzes the anti-1,4-elimination of the C-3 phosphate and the C-6 proR hydrogen from 5-enolpyruvylshikimate-3-phosphate (EPSP) to yield chorismate, which is the branch point compound that serves as the starting substrate for the three terminal pathways of aromatic amino acid biosynthesis. This reaction introduces a second double bond into the aromatic ring system. This chain is Chorismate synthase, found in Pyrobaculum arsenaticum (strain DSM 13514 / JCM 11321 / PZ6).